The following is a 456-amino-acid chain: tRNA modification GTPase MnmE (456 aa).

Positions 26, 86, and 125 each coordinate (6S)-5-formyl-5,6,7,8-tetrahydrofolate. Residues 222-376 enclose the TrmE-type G domain; that stretch reads GLSTAIIGRP…IEDRINQLFF (155 aa). K(+) is bound at residue Asn-232. Residues 232–237, 251–257, and 276–279 contribute to the GTP site; these read NVGKSS, TDIEGTT, and DTAG. Ser-236 provides a ligand contact to Mg(2+). Positions 251, 253, and 256 each coordinate K(+). Thr-257 is a binding site for Mg(2+). Residue Lys-456 participates in (6S)-5-formyl-5,6,7,8-tetrahydrofolate binding.

This sequence belongs to the TRAFAC class TrmE-Era-EngA-EngB-Septin-like GTPase superfamily. TrmE GTPase family. Homodimer. Heterotetramer of two MnmE and two MnmG subunits. It depends on K(+) as a cofactor.

The protein resides in the cytoplasm. Exhibits a very high intrinsic GTPase hydrolysis rate. Involved in the addition of a carboxymethylaminomethyl (cmnm) group at the wobble position (U34) of certain tRNAs, forming tRNA-cmnm(5)s(2)U34. The sequence is that of tRNA modification GTPase MnmE from Streptococcus thermophilus (strain CNRZ 1066).